Consider the following 159-residue polypeptide: MSTKAIYPGTFDPITNGHIDIVTRAASMFDKVVLAIAASPSKKPMFSLDERIALAEQATAHLVNVEVIGFSDLMANFARAQQANILIRGLRAVADFEYEMQLAHMNRHLMPTLESVFLMPCKEWSFISSSLVKEVARHQGDVSHFLPANVHQALLNKLK.

Thr-10 contributes to the substrate binding site. ATP-binding positions include 10 to 11 (TF) and His-18. Substrate-binding residues include Lys-42, Met-74, and Arg-88. Residues 89-91 (GLR), Glu-99, and 124-130 (WSFISSS) each bind ATP.

It belongs to the bacterial CoaD family. As to quaternary structure, homohexamer. Requires Mg(2+) as cofactor.

It localises to the cytoplasm. The enzyme catalyses (R)-4'-phosphopantetheine + ATP + H(+) = 3'-dephospho-CoA + diphosphate. The protein operates within cofactor biosynthesis; coenzyme A biosynthesis; CoA from (R)-pantothenate: step 4/5. Its function is as follows. Reversibly transfers an adenylyl group from ATP to 4'-phosphopantetheine, yielding dephospho-CoA (dPCoA) and pyrophosphate. In Klebsiella pneumoniae subsp. pneumoniae (strain ATCC 700721 / MGH 78578), this protein is Phosphopantetheine adenylyltransferase.